A 408-amino-acid chain; its full sequence is Na(+)/H(+) antiporter NhaA 2 (408 aa).

Transmembrane regions (helical) follow at residues Gly36–Val56, Ile79–Ile99, Ala115–Phe135, Gly145–Gly165, Ile174–Phe194, Ser197–Phe217, Leu225–His245, Phe281–Leu301, Leu310–Leu330, Val348–Leu368, and Phe381–Tyr401.

The protein belongs to the NhaA Na(+)/H(+) (TC 2.A.33) antiporter family.

It is found in the cell inner membrane. The enzyme catalyses Na(+)(in) + 2 H(+)(out) = Na(+)(out) + 2 H(+)(in). In terms of biological role, na(+)/H(+) antiporter that extrudes sodium in exchange for external protons. The protein is Na(+)/H(+) antiporter NhaA 2 of Flavobacterium johnsoniae (strain ATCC 17061 / DSM 2064 / JCM 8514 / BCRC 14874 / CCUG 350202 / NBRC 14942 / NCIMB 11054 / UW101) (Cytophaga johnsonae).